The sequence spans 203 residues: Small ribosomal subunit protein uS4 (203 aa).

Positions 93–153 constitute an S4 RNA-binding domain; sequence RRLDNVVYRL…EKSKNLQQVK (61 aa).

Belongs to the universal ribosomal protein uS4 family. In terms of assembly, part of the 30S ribosomal subunit. Contacts protein S5. The interaction surface between S4 and S5 is involved in control of translational fidelity.

Functionally, one of the primary rRNA binding proteins, it binds directly to 16S rRNA where it nucleates assembly of the body of the 30S subunit. In terms of biological role, with S5 and S12 plays an important role in translational accuracy. The chain is Small ribosomal subunit protein uS4 from Lactobacillus delbrueckii subsp. bulgaricus (strain ATCC 11842 / DSM 20081 / BCRC 10696 / JCM 1002 / NBRC 13953 / NCIMB 11778 / NCTC 12712 / WDCM 00102 / Lb 14).